A 303-amino-acid polypeptide reads, in one-letter code: Oxygen-dependent coproporphyrinogen-III oxidase (303 aa).

Ser93 is a substrate binding site. His97 and His107 together coordinate a divalent metal cation. His107 acts as the Proton donor in catalysis. 109–111 (NVR) provides a ligand contact to substrate. His149 and His179 together coordinate a divalent metal cation. Positions 244–279 (YVEFNLVFDRGTLFGLQSGGRTESILLSMPPLAQWR) are important for dimerization. 262-264 (GGR) lines the substrate pocket.

This sequence belongs to the aerobic coproporphyrinogen-III oxidase family. As to quaternary structure, homodimer. The cofactor is a divalent metal cation.

The protein localises to the cytoplasm. It carries out the reaction coproporphyrinogen III + O2 + 2 H(+) = protoporphyrinogen IX + 2 CO2 + 2 H2O. It functions in the pathway porphyrin-containing compound metabolism; protoporphyrin-IX biosynthesis; protoporphyrinogen-IX from coproporphyrinogen-III (O2 route): step 1/1. Functionally, involved in the heme biosynthesis. Catalyzes the aerobic oxidative decarboxylation of propionate groups of rings A and B of coproporphyrinogen-III to yield the vinyl groups in protoporphyrinogen-IX. The polypeptide is Oxygen-dependent coproporphyrinogen-III oxidase (Bordetella pertussis (strain Tohama I / ATCC BAA-589 / NCTC 13251)).